A 575-amino-acid chain; its full sequence is NEDD4-binding protein 2-like 2 (575 aa).

Basic and acidic residues-rich tracts occupy residues 69-87, 129-142, and 149-167; these read QEDK…EMPG, PPEK…KSET, and DSKR…KLEM. Disordered stretches follow at residues 69–169 and 555–575; these read QEDK…EMDT and GEQR…ADDY. Residues 162-194 are a coiled coil; the sequence is SKKLEMDTELSQFYKEIEELENENEASQGSCTE. The segment covering 564 to 575 has biased composition (polar residues); sequence GSHSQVSIADDY.

This Mus musculus (Mouse) protein is NEDD4-binding protein 2-like 2 (N4bp2l2).